Reading from the N-terminus, the 294-residue chain is Ribosomal RNA small subunit methyltransferase A (294 aa).

S-adenosyl-L-methionine-binding residues include Asn29, Val31, Gly56, Glu77, Asp107, and Asn126.

It belongs to the class I-like SAM-binding methyltransferase superfamily. rRNA adenine N(6)-methyltransferase family. RsmA subfamily.

It localises to the cytoplasm. The enzyme catalyses adenosine(1518)/adenosine(1519) in 16S rRNA + 4 S-adenosyl-L-methionine = N(6)-dimethyladenosine(1518)/N(6)-dimethyladenosine(1519) in 16S rRNA + 4 S-adenosyl-L-homocysteine + 4 H(+). In terms of biological role, specifically dimethylates two adjacent adenosines (A1518 and A1519) in the loop of a conserved hairpin near the 3'-end of 16S rRNA in the 30S particle. May play a critical role in biogenesis of 30S subunits. The protein is Ribosomal RNA small subunit methyltransferase A of Mycobacterium sp. (strain JLS).